Reading from the N-terminus, the 211-residue chain is Thiamine-phosphate synthase (211 aa).

4-amino-2-methyl-5-(diphosphooxymethyl)pyrimidine-binding positions include 37–41 and Asn-69; that span reads QLRIK. Positions 70 and 89 each coordinate Mg(2+). Residue Ser-108 coordinates 4-amino-2-methyl-5-(diphosphooxymethyl)pyrimidine. 2-[(2R,5Z)-2-carboxy-4-methylthiazol-5(2H)-ylidene]ethyl phosphate is bound at residue 134–136; the sequence is TQT. A 4-amino-2-methyl-5-(diphosphooxymethyl)pyrimidine-binding site is contributed by Lys-137. 2-[(2R,5Z)-2-carboxy-4-methylthiazol-5(2H)-ylidene]ethyl phosphate is bound by residues Gly-166 and 186-187; that span reads VS.

Belongs to the thiamine-phosphate synthase family. Mg(2+) is required as a cofactor.

It catalyses the reaction 2-[(2R,5Z)-2-carboxy-4-methylthiazol-5(2H)-ylidene]ethyl phosphate + 4-amino-2-methyl-5-(diphosphooxymethyl)pyrimidine + 2 H(+) = thiamine phosphate + CO2 + diphosphate. The enzyme catalyses 2-(2-carboxy-4-methylthiazol-5-yl)ethyl phosphate + 4-amino-2-methyl-5-(diphosphooxymethyl)pyrimidine + 2 H(+) = thiamine phosphate + CO2 + diphosphate. It carries out the reaction 4-methyl-5-(2-phosphooxyethyl)-thiazole + 4-amino-2-methyl-5-(diphosphooxymethyl)pyrimidine + H(+) = thiamine phosphate + diphosphate. It functions in the pathway cofactor biosynthesis; thiamine diphosphate biosynthesis; thiamine phosphate from 4-amino-2-methyl-5-diphosphomethylpyrimidine and 4-methyl-5-(2-phosphoethyl)-thiazole: step 1/1. In terms of biological role, condenses 4-methyl-5-(beta-hydroxyethyl)thiazole monophosphate (THZ-P) and 2-methyl-4-amino-5-hydroxymethyl pyrimidine pyrophosphate (HMP-PP) to form thiamine monophosphate (TMP). The polypeptide is Thiamine-phosphate synthase (Salmonella newport (strain SL254)).